Reading from the N-terminus, the 506-residue chain is FAD-linked oxidoreductase chry5 (506 aa).

The N-terminal stretch at 1 to 17 (MHLQALTGLATLAVTAA) is a signal peptide. Positions 59–241 (LDKPTVNIVA…TSVTSKTYDA (183 aa)) constitute an FAD-binding PCMH-type domain. Residues asparagine 205, asparagine 272, asparagine 281, asparagine 389, and asparagine 431 are each glycosylated (N-linked (GlcNAc...) asparagine).

Belongs to the oxygen-dependent FAD-linked oxidoreductase family. The cofactor is FAD.

The protein operates within pigment biosynthesis. Functionally, FAD-linked oxidoreductase; part of the gene cluster that mediates the biosynthesis of the yellow pigment chrysogine. Pyruvic acid and anthranilic acid are likely substrates for the nonribosomal peptide synthetase chry1/NRPS14, with pyruvic acid adenylated by the first A domain and anthranilic acid by the second. If pyruvic acid and anthranilic acid are merged and released from chry1/NRPS14 by hydrolysis, a subsequent amidation would lead to 2-pyruvoylaminobenzamide. This process is probably catalyzed by the amidotransferase chry2 using glutamine as amino donor. The dehydrogenase chry5 that has a terminal berberine bridge domain for C-N cyclization could catalyze the cyclization of 2-pyruvoylaminobenzamide to yield acetyl-4(3H)-quinazolidinone. A final reduction of acetyl-4(3H)-quinazolidinone catalyzed by the oxidoreductase chry4 would result in chrysogine. The polypeptide is FAD-linked oxidoreductase chry5 (Gibberella zeae (strain ATCC MYA-4620 / CBS 123657 / FGSC 9075 / NRRL 31084 / PH-1) (Wheat head blight fungus)).